The following is a 95-amino-acid chain: Protein TusB (95 aa).

It belongs to the DsrH/TusB family. Heterohexamer, formed by a dimer of trimers. The hexameric TusBCD complex contains 2 copies each of TusB, TusC and TusD. The TusBCD complex interacts with TusE.

Its subcellular location is the cytoplasm. Functionally, part of a sulfur-relay system required for 2-thiolation of 5-methylaminomethyl-2-thiouridine (mnm(5)s(2)U) at tRNA wobble positions. The protein is Protein TusB of Buchnera aphidicola subsp. Baizongia pistaciae (strain Bp).